The following is a 437-amino-acid chain: Dolichyl-diphosphooligosaccharide--protein glycosyltransferase 48 kDa subunit (437 aa).

The N-terminal stretch at 1 to 24 (MASLRVSVLLVAASCLLLGSGLRA) is a signal peptide. Topologically, residues 25–407 (GPRTLVLLEN…QYERFIPSAY (383 aa)) are lumenal. A helical membrane pass occupies residues 408 to 428 (PYYASAFSVMFGLFIFSIVFL). At 429–437 (HMKEKEKSD) the chain is on the cytoplasmic side.

This sequence belongs to the DDOST 48 kDa subunit family. In terms of assembly, component of the oligosaccharyltransferase (OST) complex.

The protein localises to the endoplasmic reticulum membrane. Its pathway is protein modification; protein glycosylation. Subunit of the oligosaccharyl transferase (OST) complex that catalyzes the initial transfer of a defined glycan (Glc(3)Man(9)GlcNAc(2) in eukaryotes) from the lipid carrier dolichol-pyrophosphate to an asparagine residue within an Asn-X-Ser/Thr consensus motif in nascent polypeptide chains, the first step in protein N-glycosylation. N-glycosylation occurs cotranslationally and the complex associates with the Sec61 complex at the channel-forming translocon complex that mediates protein translocation across the endoplasmic reticulum (ER). All subunits are required for a maximal enzyme activity. Required for the assembly of both SST3A- and SS3B-containing OST complexes. The sequence is that of Dolichyl-diphosphooligosaccharide--protein glycosyltransferase 48 kDa subunit from Xenopus tropicalis (Western clawed frog).